Reading from the N-terminus, the 92-residue chain is Small ribosomal subunit protein uS19c (92 aa).

This sequence belongs to the universal ribosomal protein uS19 family.

The protein localises to the plastid. Protein S19 forms a complex with S13 that binds strongly to the 16S ribosomal RNA. In Aneura mirabilis (Parasitic liverwort), this protein is Small ribosomal subunit protein uS19c.